The primary structure comprises 354 residues: Glutamine synthetase (354 aa).

The 80-residue stretch at Ile22 to Gly101 folds into the GS beta-grasp domain. A GS catalytic domain is found at His108–Lys354.

This sequence belongs to the glutamine synthetase family. As to quaternary structure, homooctamer.

It localises to the cytoplasm. The enzyme catalyses L-glutamate + NH4(+) + ATP = L-glutamine + ADP + phosphate + H(+). This Agaricus bisporus (White button mushroom) protein is Glutamine synthetase (glnA).